A 397-amino-acid polypeptide reads, in one-letter code: CCA-adding enzyme (397 aa).

Residues glycine 32 and arginine 35 each coordinate ATP. Residues glycine 32 and arginine 35 each contribute to the CTP site. Mg(2+) contacts are provided by aspartate 45 and aspartate 47. Arginine 116, aspartate 159, arginine 162, arginine 165, and arginine 168 together coordinate ATP. 5 residues coordinate CTP: arginine 116, aspartate 159, arginine 162, arginine 165, and arginine 168.

It belongs to the tRNA nucleotidyltransferase/poly(A) polymerase family. Bacterial CCA-adding enzyme type 3 subfamily. In terms of assembly, homodimer. The cofactor is Mg(2+).

It carries out the reaction a tRNA precursor + 2 CTP + ATP = a tRNA with a 3' CCA end + 3 diphosphate. The catalysed reaction is a tRNA with a 3' CCA end + 2 CTP + ATP = a tRNA with a 3' CCACCA end + 3 diphosphate. Catalyzes the addition and repair of the essential 3'-terminal CCA sequence in tRNAs without using a nucleic acid template. Adds these three nucleotides in the order of C, C, and A to the tRNA nucleotide-73, using CTP and ATP as substrates and producing inorganic pyrophosphate. tRNA 3'-terminal CCA addition is required both for tRNA processing and repair. Also involved in tRNA surveillance by mediating tandem CCA addition to generate a CCACCA at the 3' terminus of unstable tRNAs. While stable tRNAs receive only 3'-terminal CCA, unstable tRNAs are marked with CCACCA and rapidly degraded. The sequence is that of CCA-adding enzyme from Levilactobacillus brevis (strain ATCC 367 / BCRC 12310 / CIP 105137 / JCM 1170 / LMG 11437 / NCIMB 947 / NCTC 947) (Lactobacillus brevis).